A 199-amino-acid chain; its full sequence is N-(5'-phosphoribosyl)anthranilate isomerase (199 aa).

It belongs to the TrpF family.

It carries out the reaction N-(5-phospho-beta-D-ribosyl)anthranilate = 1-(2-carboxyphenylamino)-1-deoxy-D-ribulose 5-phosphate. It functions in the pathway amino-acid biosynthesis; L-tryptophan biosynthesis; L-tryptophan from chorismate: step 3/5. The polypeptide is N-(5'-phosphoribosyl)anthranilate isomerase (Streptococcus pneumoniae (strain ATCC BAA-255 / R6)).